A 380-amino-acid chain; its full sequence is Queuine tRNA-ribosyltransferase (380 aa).

Aspartate 95 acts as the Proton acceptor in catalysis. Residues 95-99 (DSGGF), aspartate 149, glutamine 192, and glycine 219 each bind substrate. The segment at 250 to 256 (GVGSPDS) is RNA binding. Catalysis depends on aspartate 269, which acts as the Nucleophile. The segment at 274 to 278 (TRIGR) is RNA binding; important for wobble base 34 recognition. The Zn(2+) site is built by cysteine 307, cysteine 309, cysteine 312, and histidine 338.

It belongs to the queuine tRNA-ribosyltransferase family. As to quaternary structure, homodimer. Within each dimer, one monomer is responsible for RNA recognition and catalysis, while the other monomer binds to the replacement base PreQ1. Zn(2+) is required as a cofactor.

The enzyme catalyses 7-aminomethyl-7-carbaguanine + guanosine(34) in tRNA = 7-aminomethyl-7-carbaguanosine(34) in tRNA + guanine. It functions in the pathway tRNA modification; tRNA-queuosine biosynthesis. Functionally, catalyzes the base-exchange of a guanine (G) residue with the queuine precursor 7-aminomethyl-7-deazaguanine (PreQ1) at position 34 (anticodon wobble position) in tRNAs with GU(N) anticodons (tRNA-Asp, -Asn, -His and -Tyr). Catalysis occurs through a double-displacement mechanism. The nucleophile active site attacks the C1' of nucleotide 34 to detach the guanine base from the RNA, forming a covalent enzyme-RNA intermediate. The proton acceptor active site deprotonates the incoming PreQ1, allowing a nucleophilic attack on the C1' of the ribose to form the product. After dissociation, two additional enzymatic reactions on the tRNA convert PreQ1 to queuine (Q), resulting in the hypermodified nucleoside queuosine (7-(((4,5-cis-dihydroxy-2-cyclopenten-1-yl)amino)methyl)-7-deazaguanosine). The polypeptide is Queuine tRNA-ribosyltransferase (Geobacillus thermodenitrificans (strain NG80-2)).